Here is a 134-residue protein sequence, read N- to C-terminus: Large ribosomal subunit protein eL32 (134 aa).

Belongs to the eukaryotic ribosomal protein eL32 family.

This is Large ribosomal subunit protein eL32 (RpL32) from Drosophila bifasciata (Fruit fly).